The sequence spans 268 residues: tRNA threonylcarbamoyladenosine dehydratase (268 aa).

The chain crosses the membrane as a helical span at residues 237 to 257 (GFGAATMVTATFGFVAVSHAL).

It belongs to the HesA/MoeB/ThiF family. As to quaternary structure, interacts with CsdE.

It localises to the membrane. In terms of biological role, catalyzes the ATP-dependent dehydration of threonylcarbamoyladenosine at position 37 (t(6)A37) to form cyclic t(6)A37 (ct(6)A37) in tRNAs that read codons beginning with adenine. TcdA is also part of a sulfur transfer pathway; is able to accept sulfur from CsdA directly in vitro, but CsdE might act as the sulfur donor in vivo. The chain is tRNA threonylcarbamoyladenosine dehydratase (tcdA) from Escherichia coli (strain K12).